The chain runs to 461 residues: Probable protein phosphatase 2C 40 (461 aa).

The segment at 34–63 (REASAERASASASAGAGGRERERRPSVAAG) is disordered. Residues 57 to 321 (RPSVAAGQAC…DDTTCIVIDI (265 aa)) enclose the PPM-type phosphatase domain. Mn(2+) is bound by residues aspartate 98, glycine 99, aspartate 273, and aspartate 312. Residues 439–453 (KKEAMEGKRHSRDSS) are compositionally biased toward basic and acidic residues. A disordered region spans residues 439–461 (KKEAMEGKRHSRDSSSRNSGSSE).

Belongs to the PP2C family. It depends on Mg(2+) as a cofactor. The cofactor is Mn(2+). Expressed in leaves, leaf sheaths, panicles, nodes and internodes. Expressed at low levels in roots and stems.

The protein localises to the nucleus. It localises to the cytoplasm. The catalysed reaction is O-phospho-L-seryl-[protein] + H2O = L-seryl-[protein] + phosphate. The enzyme catalyses O-phospho-L-threonyl-[protein] + H2O = L-threonyl-[protein] + phosphate. Its function is as follows. Mediates the negative regulation of osmotic and salt stress tolerance through regulation of the jasmonate and abscisic acid signaling pathways and modulation of the raffinose family oligosaccharide metabolism pathway. The sequence is that of Probable protein phosphatase 2C 40 from Oryza sativa subsp. japonica (Rice).